The following is an 886-amino-acid chain: Vam6/Vps39-like protein (886 aa).

Residues P15–I294 form the CNH domain. Residues F573–S750 form a CHCR repeat.

It belongs to the VAM6/VPS39 family. As to quaternary structure, homooligomer. Interacts with TGFBR2 and, less efficiently, with TGFBR1; interaction with TGFBR2 is independent of the receptor kinase activity and of the presence of TGF-beta. Also interacts with ACVR2B, but not with BMPR2. Interacts with SMAD4, preferentially following TGF-beta treatment. Component of the putative homotypic fusion and vacuole protein sorting (HOPS) complex; the core of which composed of the class C Vps proteins VPS11, VPS16, VPS18 and VPS33A, is associated with VPS39 and VPS41. Interacts with PLEKHM2; involved in VPS39 recruitment to ARL8B-containing lysosomes. Associates with adapter protein complex 3 (AP-3) and clathrin:AP-3 complexes. Interacts with STX17; this interaction is increased in the absence of TMEM39A. Interacts with RAB7, RAB2A and RAB2B. Interacts with RAB2A (GTP-bound); the interaction contributes to obtaining a functional HOPS complex that promotes autophagosome-lysosome membrane fusion driven by STX17-SNAP29-VAMP8. Interacts with RAB39A (GTP-bound) and RAB39B (GTP-bound); interaction with RAB39A contributes to obtaining a functional HOPS complex.

The protein resides in the cytoplasm. The protein localises to the lysosome membrane. It localises to the late endosome membrane. Functionally, regulator of TGF-beta/activin signaling, inhibiting SMAD3- and activating SMAD2-dependent transcription. Acts by interfering with SMAD3/SMAD4 complex formation, this would lead to inhibition of SMAD3-dependent transcription and relieve SMAD3 inhibition of SMAD2-dependent promoters, thus increasing SMAD2-dependent transcription. Its function is as follows. Plays a role in vesicle-mediated protein trafficking to lysosomal compartments including the endocytic membrane transport and autophagic pathways. Acts as a component of the HOPS endosomal tethering complex which is proposed to be involved in the Rab5-to-Rab7 endosome conversion probably implicating MON1A/B, and via binding SNAREs and SNARE complexes to mediate tethering and docking events during SNARE-mediated membrane fusion. The HOPS complex is proposed to be recruited to Rab7 on the late endosomal membrane and to regulate late endocytic, phagocytic and autophagic traffic towards lysosomes. Involved in homotypic vesicle fusions between late endosomes and in heterotypic fusions between late endosomes and lysosomes. Required for fusion of endosomes and autophagosomes with lysosomes. This Mus musculus (Mouse) protein is Vam6/Vps39-like protein.